The chain runs to 629 residues: tRNA uridine 5-carboxymethylaminomethyl modification enzyme MnmG (629 aa).

FAD is bound by residues 13-18 (GGGHAG), valine 125, and serine 180. 273 to 287 (GPRYCPSIEDKVMRF) is an NAD(+) binding site. Glutamine 370 provides a ligand contact to FAD.

This sequence belongs to the MnmG family. As to quaternary structure, homodimer. Heterotetramer of two MnmE and two MnmG subunits. FAD serves as cofactor.

The protein localises to the cytoplasm. In terms of biological role, NAD-binding protein involved in the addition of a carboxymethylaminomethyl (cmnm) group at the wobble position (U34) of certain tRNAs, forming tRNA-cmnm(5)s(2)U34. This chain is tRNA uridine 5-carboxymethylaminomethyl modification enzyme MnmG, found in Shigella flexneri serotype 5b (strain 8401).